A 426-amino-acid polypeptide reads, in one-letter code: tRNA modification GTPase MnmE (426 aa).

3 residues coordinate (6S)-5-formyl-5,6,7,8-tetrahydrofolate: Arg-20, Glu-77, and Met-117. Residues 213-350 form the TrmE-type G domain; it reads GFEVAILGAP…LLTDIEGVLS (138 aa). K(+) is bound at residue Asn-223. GTP contacts are provided by residues 223 to 228, 242 to 248, and 267 to 270; these read NAGKST, SDVPGTT, and DTAG. Ser-227 is a Mg(2+) binding site. Residues Ser-242, Val-244, and Thr-247 each coordinate K(+). Thr-248 is a Mg(2+) binding site. Position 426 (Lys-426) interacts with (6S)-5-formyl-5,6,7,8-tetrahydrofolate.

This sequence belongs to the TRAFAC class TrmE-Era-EngA-EngB-Septin-like GTPase superfamily. TrmE GTPase family. In terms of assembly, homodimer. Heterotetramer of two MnmE and two MnmG subunits. The cofactor is K(+).

It localises to the cytoplasm. Its function is as follows. Exhibits a very high intrinsic GTPase hydrolysis rate. Involved in the addition of a carboxymethylaminomethyl (cmnm) group at the wobble position (U34) of certain tRNAs, forming tRNA-cmnm(5)s(2)U34. This chain is tRNA modification GTPase MnmE, found in Jannaschia sp. (strain CCS1).